Consider the following 668-residue polypeptide: Ubiquitin ligase complex F-box protein UFO1 (668 aa).

Positions 5-51 constitute an F-box domain; sequence GLVLQDLPPEILINIFSHLDEKDLFTLQELSTHFRNLIHDEELWKNL. The residue at position 511 (serine 511) is a Phosphoserine. Threonine 514 is modified (phosphothreonine). 3 UIM domains span residues 547–566, 583–602, and 651–668; these read DEDE…YETQ, EDDE…DERR, and NVDE…SEIN. Positions 564 to 578 are enriched in polar residues; that stretch reads ETQTNSSANHGNNTN. Disordered regions lie at residues 564-585 and 599-639; these read ETQT…DEDD and DERR…TENT.

As to quaternary structure, interacts with SKP1. Component of the probable SCF(UFO1) complex containing CDC53, SKP1, RBX1 and UFO1.

Its pathway is protein modification; protein ubiquitination. In terms of biological role, substrate recognition component of a SCF (SKP1-CUL1-F-box protein) E3 ubiquitin-protein ligase complex which mediates the ubiquitination and subsequent proteasomal degradation of target proteins. Probably recognizes and binds to phosphorylated target proteins. In Saccharomyces cerevisiae (strain ATCC 204508 / S288c) (Baker's yeast), this protein is Ubiquitin ligase complex F-box protein UFO1 (UFO1).